We begin with the raw amino-acid sequence, 142 residues long: Hemoglobin subunit alpha-A (142 aa).

Positions 2–142 constitute a Globin domain; that stretch reads VLSAADKNNV…VGTVLTAKYR (141 aa). H59 contacts O2. Position 88 (H88) interacts with heme b.

Belongs to the globin family. Heterotetramer of two alpha chains and two beta chains. Red blood cells.

In terms of biological role, involved in oxygen transport from the lung to the various peripheral tissues. This chain is Hemoglobin subunit alpha-A (HBAA), found in Gallus gallus (Chicken).